A 900-amino-acid chain; its full sequence is Bifunctional uridylyltransferase/uridylyl-removing enzyme (900 aa).

The segment at 1–342 (MPQVDPELFD…PCEQPVQIQP (342 aa)) is uridylyltransferase. Residues 343-705 (LNSRFQLRDG…TTQREFESGS (363 aa)) are uridylyl-removing. The 123-residue stretch at 461 to 583 (VDAHTLNLIK…VGDQTHLDYL (123 aa)) folds into the HD domain. 2 ACT domains span residues 706-789 (QIFI…IIQR) and 816-891 (VLEV…DNGR).

This sequence belongs to the GlnD family. Mg(2+) serves as cofactor.

It carries out the reaction [protein-PII]-L-tyrosine + UTP = [protein-PII]-uridylyl-L-tyrosine + diphosphate. The enzyme catalyses [protein-PII]-uridylyl-L-tyrosine + H2O = [protein-PII]-L-tyrosine + UMP + H(+). Its activity is regulated as follows. Uridylyltransferase (UTase) activity is inhibited by glutamine, while glutamine activates uridylyl-removing (UR) activity. Modifies, by uridylylation and deuridylylation, the PII regulatory proteins (GlnB and homologs), in response to the nitrogen status of the cell that GlnD senses through the glutamine level. Under low glutamine levels, catalyzes the conversion of the PII proteins and UTP to PII-UMP and PPi, while under higher glutamine levels, GlnD hydrolyzes PII-UMP to PII and UMP (deuridylylation). Thus, controls uridylylation state and activity of the PII proteins, and plays an important role in the regulation of nitrogen assimilation and metabolism. This Pseudomonas aeruginosa (strain LESB58) protein is Bifunctional uridylyltransferase/uridylyl-removing enzyme.